The chain runs to 358 residues: UDP-N-acetylglucosamine--N-acetylmuramyl-(pentapeptide) pyrophosphoryl-undecaprenol N-acetylglucosamine transferase (358 aa).

Residues 11 to 13, asparagine 120, arginine 161, serine 188, and glutamine 282 contribute to the UDP-N-acetyl-alpha-D-glucosamine site; that span reads TGG.

Belongs to the glycosyltransferase 28 family. MurG subfamily.

It localises to the cell inner membrane. It carries out the reaction di-trans,octa-cis-undecaprenyl diphospho-N-acetyl-alpha-D-muramoyl-L-alanyl-D-glutamyl-meso-2,6-diaminopimeloyl-D-alanyl-D-alanine + UDP-N-acetyl-alpha-D-glucosamine = di-trans,octa-cis-undecaprenyl diphospho-[N-acetyl-alpha-D-glucosaminyl-(1-&gt;4)]-N-acetyl-alpha-D-muramoyl-L-alanyl-D-glutamyl-meso-2,6-diaminopimeloyl-D-alanyl-D-alanine + UDP + H(+). Its pathway is cell wall biogenesis; peptidoglycan biosynthesis. Functionally, cell wall formation. Catalyzes the transfer of a GlcNAc subunit on undecaprenyl-pyrophosphoryl-MurNAc-pentapeptide (lipid intermediate I) to form undecaprenyl-pyrophosphoryl-MurNAc-(pentapeptide)GlcNAc (lipid intermediate II). The chain is UDP-N-acetylglucosamine--N-acetylmuramyl-(pentapeptide) pyrophosphoryl-undecaprenol N-acetylglucosamine transferase from Synechococcus sp. (strain CC9311).